The chain runs to 1176 residues: Histidine kinase 2 (1176 aa).

Residues 1-29 (MSITCELLNLTSKKAKKSSSSDKKWLKKP) are Cytoplasmic-facing. A helical membrane pass occupies residues 30 to 50 (LFFLILCGSLVIVLVMFLRLG). Over 51–174 (RSQKEETDSC…LEQGLSSYLR (124 aa)) the chain is Extracellular. The helical transmembrane segment at 175-195 (NAWWCLILGVLVCHKIYVSHS) threads the bilayer. Over 196 to 232 (KARGERKEKVHLQEALAPKKQQQRAQTSSRGAGRWRK) the chain is Cytoplasmic. A helical transmembrane segment spans residues 233–253 (NILLLGILGGVSFSVWWFWDT). At 254 to 536 (NEEIIMKRRE…CRFKHKLPIP (283 aa)) the chain is on the extracellular side. The CHASE domain maps to 302-526 (IPSAIDQRTF…GDPSRNHEMH (225 aa)). The chain crosses the membrane as a helical span at residues 537–557 (WTAITPSILVLVITFLVGYIL). Residues 558–1176 (YEAINRIATV…TAVARFFEPC (619 aa)) are Cytoplasmic-facing. The region spanning 594–867 (TVSHEIRTPM…TFSFTGVFGK (274 aa)) is the Histidine kinase domain. His-597 carries the phosphohistidine; by autocatalysis modification. 2 Response regulatory domains span residues 891-1013 (RALV…QETL) and 1036-1173 (QILV…ARFF). Residues Asp-942 and Asp-1086 each carry the 4-aspartylphosphate modification.

As to quaternary structure, self-interacts. Interacts with AHK3, AHP1, AHP2, AHP3, AHP5, ATAF2, AT2S3, BETAA-AD, CYP20-2, DRP1A, HIR1, HIR2, PI4KB1, PI4KG5 and At4g12060. In terms of processing, autophosphorylated predominantly on His residues. Activation probably requires a transfer of a phosphate group between a His in the transmitter domain and an Asp of the receiver domain. In terms of tissue distribution, expressed in roots, leaves and flowers, mostly in the vascular tissues. Present in seedlings.

Its subcellular location is the endoplasmic reticulum membrane. The enzyme catalyses ATP + protein L-histidine = ADP + protein N-phospho-L-histidine.. Its activity is regulated as follows. Activated by cytokinins to initiate phosphorelay signaling. Cytokinins (CK) receptor related to bacterial two-component regulators. Functions as a histidine kinase and transmits the stress signal to a downstream MAPK cascade. This protein undergoes an ATP-dependent autophosphorylation at a conserved histidine residue in the kinase core, and a phosphoryl group is then transferred to a conserved aspartate residue in the receiver domain. In the presence of cytokinin, feeds phosphate to phosphorelay-integrating histidine phosphotransfer protein (HPt) and activates subsequent cascade. Involved in meristems establishment in seedlings. Redundant negative regulator of drought and salt stress responses and abscisic acid (ABA) signaling. Together with AHK3, plays a negative regulatory role in cold stress signaling via inhibition of ABA response, occurring independently of the cold acclimation pathway. Redundant positive regulator of cytokinin signaling that regulates many developmental processes including seed germination, cell division, seed size, chlorophyll retention during leaf senescence, root repression and shoot promotion. Involved in alkamides (e.g. N-isobutyl decanamide) and N-acylethanolamides (NAE) signaling that control meristematic activity and differentiation processes during plant development. Contributes to vascular bundle formation and secondary growth in a cytokinin-dependent manner, probably by promoting the maintenance of mitotic activity and/or identity of procambial cells. Together with AHK4, required for growth and reproduction promotion stimulated by the endophytic fungus Piriformospora indica in a trans-zeatin-dependent manner. Required by the cytokinin-dependent flower development regulation pathway. The sequence is that of Histidine kinase 2 (AHK2) from Arabidopsis thaliana (Mouse-ear cress).